Consider the following 197-residue polypeptide: 3-isopropylmalate dehydratase small subunit (197 aa).

The protein belongs to the LeuD family. LeuD type 1 subfamily. In terms of assembly, heterodimer of LeuC and LeuD.

It catalyses the reaction (2R,3S)-3-isopropylmalate = (2S)-2-isopropylmalate. It functions in the pathway amino-acid biosynthesis; L-leucine biosynthesis; L-leucine from 3-methyl-2-oxobutanoate: step 2/4. In terms of biological role, catalyzes the isomerization between 2-isopropylmalate and 3-isopropylmalate, via the formation of 2-isopropylmaleate. The polypeptide is 3-isopropylmalate dehydratase small subunit (Mycolicibacterium vanbaalenii (strain DSM 7251 / JCM 13017 / BCRC 16820 / KCTC 9966 / NRRL B-24157 / PYR-1) (Mycobacterium vanbaalenii)).